We begin with the raw amino-acid sequence, 137 residues long: Large ribosomal subunit protein uL16 (137 aa).

The protein belongs to the universal ribosomal protein uL16 family. In terms of assembly, part of the 50S ribosomal subunit.

Its function is as follows. Binds 23S rRNA and is also seen to make contacts with the A and possibly P site tRNAs. The polypeptide is Large ribosomal subunit protein uL16 (Bartonella tribocorum (strain CIP 105476 / IBS 506)).